Reading from the N-terminus, the 406-residue chain is Glucose-6-phosphate isomerase (406 aa).

Glu-259 acts as the Proton donor in catalysis. Active-site residues include His-284 and Lys-397.

Belongs to the GPI family.

The protein resides in the cytoplasm. It catalyses the reaction alpha-D-glucose 6-phosphate = beta-D-fructose 6-phosphate. The protein operates within carbohydrate biosynthesis; gluconeogenesis. Its pathway is carbohydrate degradation; glycolysis; D-glyceraldehyde 3-phosphate and glycerone phosphate from D-glucose: step 2/4. Its function is as follows. Catalyzes the reversible isomerization of glucose-6-phosphate to fructose-6-phosphate. The protein is Glucose-6-phosphate isomerase of Campylobacter jejuni subsp. jejuni serotype O:2 (strain ATCC 700819 / NCTC 11168).